The chain runs to 90 residues: Small ribosomal subunit protein uS15 (90 aa).

It belongs to the universal ribosomal protein uS15 family. In terms of assembly, part of the 30S ribosomal subunit. Forms a bridge to the 50S subunit in the 70S ribosome, contacting the 23S rRNA.

One of the primary rRNA binding proteins, it binds directly to 16S rRNA where it helps nucleate assembly of the platform of the 30S subunit by binding and bridging several RNA helices of the 16S rRNA. Functionally, forms an intersubunit bridge (bridge B4) with the 23S rRNA of the 50S subunit in the ribosome. The polypeptide is Small ribosomal subunit protein uS15 (Herpetosiphon aurantiacus (strain ATCC 23779 / DSM 785 / 114-95)).